A 461-amino-acid polypeptide reads, in one-letter code: Phytase A (461 aa).

Cysteines 22 and 31 form a disulfide. 1D-myo-inositol hexakisphosphate-binding residues include Gln-41, Tyr-42, Arg-71, His-72, Arg-75, and Thr-78. 4 cysteine pairs are disulfide-bonded: Cys-61–Cys-405, Cys-205–Cys-456, Cys-254–Cys-272, and Cys-427–Cys-435. The active-site Nucleophile is the His-72. Asn-95 and Asn-110 each carry an N-linked (GlcNAc...) asparagine glycan. 1D-myo-inositol hexakisphosphate is bound at residue Arg-155. A glycan (N-linked (GlcNAc...) asparagine) is linked at Asn-197. Lys-291 is a binding site for 1D-myo-inositol hexakisphosphate. N-linked (GlcNAc...) asparagine glycosylation is found at Asn-329 and Asn-343. The 1D-myo-inositol hexakisphosphate site is built by His-352 and Asp-353. Asn-367 carries an N-linked (GlcNAc...) asparagine glycan.

Belongs to the histidine acid phosphatase family. As to quaternary structure, monomer. In terms of processing, glycosylated.

The protein localises to the secreted. The enzyme catalyses 1D-myo-inositol hexakisphosphate + H2O = 1D-myo-inositol 1,2,4,5,6-pentakisphosphate + phosphate. It catalyses the reaction 1D-myo-inositol 1,2,4,5,6-pentakisphosphate + H2O = 1D-myo-inositol 1,2,5,6-tetrakisphosphate + phosphate. It carries out the reaction 1D-myo-inositol 1,2,5,6-tetrakisphosphate + H2O = 1D-myo-inositol 1,2,6-trisphosphate + phosphate. The catalysed reaction is 1D-myo-inositol 1,2,6-trisphosphate + H2O = 1D-myo-inositol 1,2-bisphosphate + phosphate. The enzyme catalyses 1D-myo-inositol 1,2-bisphosphate + H2O = 1D-myo-inositol 2-phosphate + phosphate. Its function is as follows. Catalyzes the phosphate monoester hydrolysis of phytic acid (myo-inositol hexakisphosphate), which results in the stepwise formation of myo-inositol pentakis-, tetrakis-, tris-, bis-, and monophosphates, as well as the liberation of inorganic phosphate. Myo-inositol 2-monophosphate is the end product. This chain is Phytase A, found in Penicillium oxalicum.